Reading from the N-terminus, the 234-residue chain is Ribosomal RNA small subunit methyltransferase G (234 aa).

The S-adenosyl-L-methionine site is built by Gly85, Phe90, and Arg155.

It belongs to the methyltransferase superfamily. RNA methyltransferase RsmG family.

It is found in the cytoplasm. It catalyses the reaction guanosine(527) in 16S rRNA + S-adenosyl-L-methionine = N(7)-methylguanosine(527) in 16S rRNA + S-adenosyl-L-homocysteine. In terms of biological role, specifically methylates the N7 position of guanine in position 527 of 16S rRNA. The chain is Ribosomal RNA small subunit methyltransferase G from Rhodopseudomonas palustris (strain BisB18).